Here is a 77-residue protein sequence, read N- to C-terminus: Large ribosomal subunit protein bL28 (77 aa).

This sequence belongs to the bacterial ribosomal protein bL28 family.

The polypeptide is Large ribosomal subunit protein bL28 (Ralstonia nicotianae (strain ATCC BAA-1114 / GMI1000) (Ralstonia solanacearum)).